A 161-amino-acid polypeptide reads, in one-letter code: Ribonuclease P protein component 2 (161 aa).

Belongs to the eukaryotic/archaeal RNase P protein component 2 family. As to quaternary structure, consists of a catalytic RNA component and at least 4-5 protein subunits.

The protein localises to the cytoplasm. The enzyme catalyses Endonucleolytic cleavage of RNA, removing 5'-extranucleotides from tRNA precursor.. In terms of biological role, part of ribonuclease P, a protein complex that generates mature tRNA molecules by cleaving their 5'-ends. The sequence is that of Ribonuclease P protein component 2 from Natronomonas pharaonis (strain ATCC 35678 / DSM 2160 / CIP 103997 / JCM 8858 / NBRC 14720 / NCIMB 2260 / Gabara) (Halobacterium pharaonis).